The sequence spans 1236 residues: ABC transporter B family member 9 (1236 aa).

The 288-residue stretch at 33-320 (MTVGTIAAAG…TSPSLNAFAA (288 aa)) folds into the ABC transmembrane type-1 1 domain. 6 consecutive transmembrane segments (helical) span residues 38 to 58 (IAAAGNGLTQPFMTLIFGQLI), 80 to 100 (FIYLAVYSCVVAFLQVSCWMV), 158 to 178 (QLLCTFLGGFAIAFYKGPLLA), 179 to 199 (GVLCSCIPLIVIAGAAMSLIM), 257 to 277 (ISGFGLGTMLAVIFCSYGLAV), and 288 to 308 (GYNGGQVINVIFAVLTGGMSL). The region spanning 355 to 591 (IELKDVYFRY…PEGAYSQLVR (237 aa)) is the ABC transporter 1 domain. An ATP-binding site is contributed by 390–397 (GQSGSGKS). Residue Asn542 is glycosylated (N-linked (GlcNAc...) asparagine). A disordered region spans residues 593-616 (QEGSKEEATESERPETSLDVERSG). Residues 594–616 (EGSKEEATESERPETSLDVERSG) are compositionally biased toward basic and acidic residues. N-linked (GlcNAc...) asparagine glycans are attached at residues Asn631 and Asn653. Transmembrane regions (helical) follow at residues 685 to 705 (VLVLGSIAAMVHGTVFPIFGL), 725 to 745 (SHFWALIYIALGLTNFVMIPV), 785 to 805 (SLVGDALALIVQNIATVTTGL), 806 to 826 (IIAFTANWILALIVLALSPFI), 902 to 922 (FSFFFLYCINCVCFVSGAGLI), and 927 to 947 (ATFGEVFKVFFALTIMAIGVS). The ABC transmembrane type-1 2 domain maps to 686 to 958 (LVLGSIAAMV…TSAMAPDSNK (273 aa)). The ABC transporter 2 domain maps to 993–1230 (IEFRHVSFRY…SGGAYASLVT (238 aa)). 1028–1035 (GESGSGKS) lines the ATP pocket. Residues Asn1082 and Asn1181 are each glycosylated (N-linked (GlcNAc...) asparagine).

It belongs to the ABC transporter superfamily. ABCB family. Multidrug resistance exporter (TC 3.A.1.201) subfamily.

The protein resides in the membrane. This Arabidopsis thaliana (Mouse-ear cress) protein is ABC transporter B family member 9 (ABCB9).